A 216-amino-acid polypeptide reads, in one-letter code: Ribosomal RNA large subunit methyltransferase E (216 aa).

The S-adenosyl-L-methionine site is built by Gly60, Trp62, Asp80, Asp96, and Asp121. Lys161 functions as the Proton acceptor in the catalytic mechanism.

This sequence belongs to the class I-like SAM-binding methyltransferase superfamily. RNA methyltransferase RlmE family.

It is found in the cytoplasm. The enzyme catalyses uridine(2552) in 23S rRNA + S-adenosyl-L-methionine = 2'-O-methyluridine(2552) in 23S rRNA + S-adenosyl-L-homocysteine + H(+). In terms of biological role, specifically methylates the uridine in position 2552 of 23S rRNA at the 2'-O position of the ribose in the fully assembled 50S ribosomal subunit. The protein is Ribosomal RNA large subunit methyltransferase E of Pseudomonas savastanoi pv. phaseolicola (strain 1448A / Race 6) (Pseudomonas syringae pv. phaseolicola (strain 1448A / Race 6)).